The chain runs to 445 residues: Probable D-serine dehydratase (445 aa).

Lysine 111 carries the post-translational modification N6-(pyridoxal phosphate)lysine.

This sequence belongs to the serine/threonine dehydratase family. DsdA subfamily. Pyridoxal 5'-phosphate is required as a cofactor.

The enzyme catalyses D-serine = pyruvate + NH4(+). In Burkholderia pseudomallei (strain 1710b), this protein is Probable D-serine dehydratase.